Consider the following 271-residue polypeptide: Bifunctional protein FolD (271 aa).

NADP(+) is bound by residues 154–156 (GRS), Ser181, and Ile222.

Belongs to the tetrahydrofolate dehydrogenase/cyclohydrolase family. In terms of assembly, homodimer.

The catalysed reaction is (6R)-5,10-methylene-5,6,7,8-tetrahydrofolate + NADP(+) = (6R)-5,10-methenyltetrahydrofolate + NADPH. It carries out the reaction (6R)-5,10-methenyltetrahydrofolate + H2O = (6R)-10-formyltetrahydrofolate + H(+). Its pathway is one-carbon metabolism; tetrahydrofolate interconversion. Its function is as follows. Catalyzes the oxidation of 5,10-methylenetetrahydrofolate to 5,10-methenyltetrahydrofolate and then the hydrolysis of 5,10-methenyltetrahydrofolate to 10-formyltetrahydrofolate. The protein is Bifunctional protein FolD of Thermotoga maritima (strain ATCC 43589 / DSM 3109 / JCM 10099 / NBRC 100826 / MSB8).